A 517-amino-acid chain; its full sequence is ATP synthase subunit alpha (517 aa).

174–181 contacts ATP; that stretch reads GDRQTGKT.

This sequence belongs to the ATPase alpha/beta chains family. In terms of assembly, F-type ATPases have 2 components, CF(1) - the catalytic core - and CF(0) - the membrane proton channel. CF(1) has five subunits: alpha(3), beta(3), gamma(1), delta(1), epsilon(1). CF(0) has three main subunits: a(1), b(2) and c(9-12). The alpha and beta chains form an alternating ring which encloses part of the gamma chain. CF(1) is attached to CF(0) by a central stalk formed by the gamma and epsilon chains, while a peripheral stalk is formed by the delta and b chains.

The protein localises to the cell inner membrane. It carries out the reaction ATP + H2O + 4 H(+)(in) = ADP + phosphate + 5 H(+)(out). In terms of biological role, produces ATP from ADP in the presence of a proton gradient across the membrane. The alpha chain is a regulatory subunit. The sequence is that of ATP synthase subunit alpha from Variovorax paradoxus (strain S110).